Here is a 288-residue protein sequence, read N- to C-terminus: ATP synthase gamma chain (288 aa).

This sequence belongs to the ATPase gamma chain family. In terms of assembly, F-type ATPases have 2 components, CF(1) - the catalytic core - and CF(0) - the membrane proton channel. CF(1) has five subunits: alpha(3), beta(3), gamma(1), delta(1), epsilon(1). CF(0) has three main subunits: a, b and c.

The protein resides in the cell inner membrane. Its function is as follows. Produces ATP from ADP in the presence of a proton gradient across the membrane. The gamma chain is believed to be important in regulating ATPase activity and the flow of protons through the CF(0) complex. The protein is ATP synthase gamma chain of Vibrio cholerae serotype O1 (strain ATCC 39541 / Classical Ogawa 395 / O395).